Reading from the N-terminus, the 44-residue chain is Large ribosomal subunit protein bL34 (44 aa).

This sequence belongs to the bacterial ribosomal protein bL34 family.

The protein is Large ribosomal subunit protein bL34 of Variovorax paradoxus (strain S110).